The primary structure comprises 156 residues: Small ribosomal subunit protein uS7 (156 aa).

Belongs to the universal ribosomal protein uS7 family. In terms of assembly, part of the 30S ribosomal subunit. Contacts proteins S9 and S11.

Functionally, one of the primary rRNA binding proteins, it binds directly to 16S rRNA where it nucleates assembly of the head domain of the 30S subunit. Is located at the subunit interface close to the decoding center, probably blocks exit of the E-site tRNA. This is Small ribosomal subunit protein uS7 from Herminiimonas arsenicoxydans.